Consider the following 352-residue polypeptide: Chorismate synthase (352 aa).

Residue R48 participates in NADP(+) binding. FMN-binding positions include 125–127 (RSS), 237–238 (NA), G278, 293–297 (KPTSS), and R319.

It belongs to the chorismate synthase family. As to quaternary structure, homotetramer. FMNH2 serves as cofactor.

It carries out the reaction 5-O-(1-carboxyvinyl)-3-phosphoshikimate = chorismate + phosphate. It participates in metabolic intermediate biosynthesis; chorismate biosynthesis; chorismate from D-erythrose 4-phosphate and phosphoenolpyruvate: step 7/7. Its function is as follows. Catalyzes the anti-1,4-elimination of the C-3 phosphate and the C-6 proR hydrogen from 5-enolpyruvylshikimate-3-phosphate (EPSP) to yield chorismate, which is the branch point compound that serves as the starting substrate for the three terminal pathways of aromatic amino acid biosynthesis. This reaction introduces a second double bond into the aromatic ring system. The chain is Chorismate synthase from Francisella tularensis subsp. mediasiatica (strain FSC147).